A 392-amino-acid polypeptide reads, in one-letter code: Formate-dependent phosphoribosylglycinamide formyltransferase (392 aa).

Residues 22 to 23 and Glu-82 each bind N(1)-(5-phospho-beta-D-ribosyl)glycinamide; that span reads EL. Residues Arg-114, Lys-155, 160–165, 195–198, and Glu-203 contribute to the ATP site; these read SSGKGQ and EGVV. In terms of domain architecture, ATP-grasp spans 119–308; the sequence is RLAAEELQLP…EFALHVRAFL (190 aa). Mg(2+)-binding residues include Glu-267 and Glu-279. N(1)-(5-phospho-beta-D-ribosyl)glycinamide-binding positions include Asp-286, Lys-355, and 362 to 363; that span reads RR.

The protein belongs to the PurK/PurT family. In terms of assembly, homodimer.

It carries out the reaction N(1)-(5-phospho-beta-D-ribosyl)glycinamide + formate + ATP = N(2)-formyl-N(1)-(5-phospho-beta-D-ribosyl)glycinamide + ADP + phosphate + H(+). It functions in the pathway purine metabolism; IMP biosynthesis via de novo pathway; N(2)-formyl-N(1)-(5-phospho-D-ribosyl)glycinamide from N(1)-(5-phospho-D-ribosyl)glycinamide (formate route): step 1/1. Functionally, involved in the de novo purine biosynthesis. Catalyzes the transfer of formate to 5-phospho-ribosyl-glycinamide (GAR), producing 5-phospho-ribosyl-N-formylglycinamide (FGAR). Formate is provided by PurU via hydrolysis of 10-formyl-tetrahydrofolate. The protein is Formate-dependent phosphoribosylglycinamide formyltransferase of Shigella flexneri.